Here is a 766-residue protein sequence, read N- to C-terminus: FYVE, RhoGEF and PH domain-containing protein 4 (766 aa).

Disordered regions lie at residues 1-20 (MEEI…PSKV), 46-83 (NLNA…DKTQ), and 134-188 (ETAT…ESPL). The interval 1-150 (MEEIKPASAS…SPTTDSCDGN (150 aa)) is actin filament-binding. 2 stretches are compositionally biased toward polar residues: residues 58–83 (LTTT…DKTQ) and 145–157 (DSCD…SSYR). Residues 167–184 (LEERGAETETKVQERENG) are compositionally biased toward basic and acidic residues. The 188-residue stretch at 206–393 (KLHKIANELL…STAASHSNSA (188 aa)) folds into the DH domain. Residues 422 to 521 (ELIKEGQILK…WIKALQETID (100 aa)) enclose the PH 1 domain. Residues 559 to 619 (DNEVTMCMKC…VCKDCYQIIS (61 aa)) form an FYVE-type zinc finger. Residues C565, C568, C582, C585, C590, C593, C611, and C614 each coordinate Zn(2+). Residues 643–740 (NSVVCSFLQY…WLKVILLAVT (98 aa)) form the PH 2 domain. 2 positions are modified to phosphoserine: S702 and S716. The tract at residues 742–766 (ETPGGPNEHPATLDDHPEPKKKSEC) is disordered. Residues 752 to 766 (ATLDDHPEPKKKSEC) are compositionally biased toward basic and acidic residues.

As to quaternary structure, homooligomer. Expressed in different tissues, including brain, cerebellum, peripheral nerve, skeletal muscle, heart, uterus, placenta and testis.

Its subcellular location is the cytoplasm. The protein resides in the cytoskeleton. It is found in the cell projection. It localises to the filopodium. Functionally, activates CDC42, a member of the Ras-like family of Rho- and Rac proteins, by exchanging bound GDP for free GTP. Plays a role in regulating the actin cytoskeleton and cell shape. Activates MAPK8. The polypeptide is FYVE, RhoGEF and PH domain-containing protein 4 (FGD4) (Homo sapiens (Human)).